The primary structure comprises 657 residues: Histidine ammonia-lyase (657 aa).

Residues 253–255 (ASG) constitute a cross-link (5-imidazolinone (Ala-Gly)). A 2,3-didehydroalanine (Ser) modification is found at serine 254. Residue threonine 396 is modified to Phosphothreonine. The residue at position 635 (serine 635) is a Phosphoserine. Position 637 is a phosphothreonine (threonine 637). Residue serine 648 is modified to Phosphoserine.

The protein belongs to the PAL/histidase family. In terms of processing, contains an active site 4-methylidene-imidazol-5-one (MIO), which is formed autocatalytically by cyclization and dehydration of residues Ala-Ser-Gly.

The catalysed reaction is L-histidine = trans-urocanate + NH4(+). It participates in amino-acid degradation; L-histidine degradation into L-glutamate; N-formimidoyl-L-glutamate from L-histidine: step 1/3. The polypeptide is Histidine ammonia-lyase (Hal) (Mus musculus (Mouse)).